A 39-amino-acid chain; its full sequence is Photosystem II reaction center protein J (39 aa).

Residues 7–27 (IPLWLVATIGGIAVLTVLGLF) traverse the membrane as a helical segment.

It belongs to the PsbJ family. In terms of assembly, PSII is composed of 1 copy each of membrane proteins PsbA, PsbB, PsbC, PsbD, PsbE, PsbF, PsbH, PsbI, PsbJ, PsbK, PsbL, PsbM, PsbT, PsbX, PsbY, PsbZ, Psb30/Ycf12, at least 3 peripheral proteins of the oxygen-evolving complex and a large number of cofactors. It forms dimeric complexes.

The protein localises to the plastid. Its subcellular location is the chloroplast thylakoid membrane. Functionally, one of the components of the core complex of photosystem II (PSII). PSII is a light-driven water:plastoquinone oxidoreductase that uses light energy to abstract electrons from H(2)O, generating O(2) and a proton gradient subsequently used for ATP formation. It consists of a core antenna complex that captures photons, and an electron transfer chain that converts photonic excitation into a charge separation. The protein is Photosystem II reaction center protein J of Cyanidioschyzon merolae (strain NIES-3377 / 10D) (Unicellular red alga).